Consider the following 535-residue polypeptide: Beta-glucosidase 47 (535 aa).

The N-terminal stretch at 1–38 (MKKSIVYEIMETKSSMYLSQFRLWLCFIITTLVSLSSS) is a signal peptide. Q73 serves as a coordination point for a beta-D-glucoside. The N-linked (GlcNAc...) asparagine glycan is linked to N93. A beta-D-glucoside-binding positions include H175 and 220 to 221 (NE). The active-site Proton donor is E221. C240 and C247 form a disulfide bridge. The N-linked (GlcNAc...) asparagine glycan is linked to N246. A beta-D-glucoside is bound at residue Y363. The cysteines at positions 371 and 376 are disulfide-linked. Residue N419 is glycosylated (N-linked (GlcNAc...) asparagine). An a beta-D-glucoside-binding site is contributed by E426. E426 (nucleophile) is an active-site residue. The N-linked (GlcNAc...) asparagine glycan is linked to N432. Residues W470, 477 to 478 (EW), and F486 contribute to the a beta-D-glucoside site.

Belongs to the glycosyl hydrolase 1 family.

The enzyme catalyses Hydrolysis of terminal, non-reducing beta-D-glucosyl residues with release of beta-D-glucose.. The polypeptide is Beta-glucosidase 47 (Arabidopsis thaliana (Mouse-ear cress)).